A 68-amino-acid chain; its full sequence is Copper transport protein ATOX1 (68 aa).

The HMA domain occupies 1 to 63; sequence MPKHEFSVDM…TLNKTGKAVS (63 aa). Residues Cys12 and Cys15 each contribute to the Cu cation site. Ser47 carries the post-translational modification Phosphoserine. Residue Lys60 is modified to N6-acetyllysine.

Belongs to the ATX1 family. Homodimer. Interacts with ATP7B. Interacts with ATP7A. Interacts (via dimer form) with SLC31A1 (via C-terminal domain); this interaction improves ATOX1 stability and controls intracellular Cu(I) levels.

Binds and deliver cytosolic copper to the copper ATPase proteins. May be important in cellular antioxidant defense. The protein is Copper transport protein ATOX1 of Mus musculus (Mouse).